The chain runs to 591 residues: Protein phosphatase EYA1 (591 aa).

3 disordered regions span residues 1–95 (MEMQ…SYPH), 150–169 (GLSQ…GTSF), and 239–319 (MTSS…PDSD). Residues 8–23 (SPHSRLSGSSESPSGP) are compositionally biased toward low complexity. Residues 28–53 (SHINSTSMTPNGTEVKTEPMSSSEIA) show a composition bias toward polar residues. Over residues 56 to 75 (AADGSLDSFSGSALGSSSFS) the composition is skewed to low complexity. A compositionally biased stretch (pro residues) spans 78 to 87 (PAHPFSPPQI). Positions 240 to 252 (TSSNTSPTTPSTN) are enriched in low complexity. Positions 253–286 (ATYQLQEPPSGVTSQAVTDPTAEYSTIHSPSTPI) are enriched in polar residues. Over residues 287–302 (KETDSERLRRGSDGKS) the composition is skewed to basic and acidic residues. Catalysis depends on Asp-327, which acts as the Nucleophile. The Mg(2+) site is built by Asp-327, Asp-329, and Asp-555. Residue Asp-329 is the Proton donor of the active site.

Belongs to the HAD-like hydrolase superfamily. EYA family. In terms of assembly, probably interacts with SIX2, SIX4 and SIX5. Interacts with H2AX in response to DNA damage. Interacts with SIX3; promotes EYA1 translocation to the nucleus. It depends on Mg(2+) as a cofactor. Sumoylated with SUMO1. Extensively expressed in cranial placodes, branchial arches, CNS and developing eye and nose.

The protein localises to the cytoplasm. It is found in the nucleus. The enzyme catalyses O-phospho-L-tyrosyl-[protein] + H2O = L-tyrosyl-[protein] + phosphate. The catalysed reaction is O-phospho-L-seryl-[protein] + H2O = L-seryl-[protein] + phosphate. It carries out the reaction O-phospho-L-threonyl-[protein] + H2O = L-threonyl-[protein] + phosphate. In terms of biological role, functions both as protein phosphatase and as transcriptional coactivator for SIX1, and probably also for SIX2, SIX4 and SIX5. Tyrosine phosphatase that dephosphorylates 'Tyr-142' of histone H2AX (H2AXY142ph) and promotes efficient DNA repair via the recruitment of DNA repair complexes containing MDC1. 'Tyr-142' phosphorylation of histone H2AX plays a central role in DNA repair and acts as a mark that distinguishes between apoptotic and repair responses to genotoxic stress. Its function as histone phosphatase may contribute to its function in transcription regulation during organogenesis. Also has phosphatase activity with proteins phosphorylated on Ser and Thr residues (in vitro). Required for normal embryonic development of the craniofacial and trunk skeleton, kidneys and ears. Together with SIX1, it plays an important role in hypaxial muscle development; in this it is functionally redundant with EYA2. This chain is Protein phosphatase EYA1 (Eya1), found in Mus musculus (Mouse).